Here is a 656-residue protein sequence, read N- to C-terminus: PAN2-PAN3 deadenylation complex subunit pan3 (656 aa).

2 disordered regions span residues 1–24 (MAAT…KNRD) and 75–117 (SFTP…QQAN). A C3H1-type zinc finger spans residues 24 to 53 (DTKETLCRNVVIYGHCRWEDSGCTFNHDQN). A PABPC-interacting motif-2 (PAM-2) motif is present at residues 63–83 (NSNRRVFNVESPSFTPANQQQ). Polar residues-rich tracts occupy residues 75–96 (SFTP…SQAA) and 107–117 (GTSTPTLQQAN). Residues 251–514 (QLLPNSGLPN…TVETLLGGIT (264 aa)) are pseudokinase domain. Residues 275-280 (TRNSTC), Arg302, 352-359 (DFHPLSET), and 412-413 (SK) each bind ATP. A coiled-coil region spans residues 515-553 (THLANFANFVMQESDEKEFHLMRELENGRIARLMFKLSV). Residues 554–656 (VNERGDSCGV…SKPSATGATI (103 aa)) form a knob domain region.

Belongs to the protein kinase superfamily. PAN3 family. As to quaternary structure, homodimer. Forms a heterotrimer with a catalytic subunit par-1/pan2 to form the poly(A)-nuclease (PAN) deadenylation complex. Interacts (via PAM-2 motif) with poly(A)-binding protein pabp-1 (via PABC domain), conferring substrate specificity of the enzyme complex.

It is found in the cytoplasm. Regulatory subunit of the poly(A)-nuclease (PAN) deadenylation complex, one of two cytoplasmic mRNA deadenylases involved in mRNA turnover. PAN specifically shortens poly(A) tails of RNA and the activity is stimulated by poly(A)-binding protein pabp-1. PAN deadenylation is followed by rapid degradation of the shortened mRNA tails by the CCR4-NOT complex. Deadenylated mRNAs are then degraded by two alternative mechanisms, namely exosome-mediated 3'-5' exonucleolytic degradation, or deadenylation-dependent mRNA decaping and subsequent 5'-3' exonucleolytic degradation by rgb-30/xrn1. May also be involved in post-transcriptional maturation of mRNA poly(A) tails. par-2/pan3 acts as a positive regulator for PAN activity, recruiting the catalytic subunit par-1/pan2 to mRNA via its interaction with RNA and with pabp-1. This is PAN2-PAN3 deadenylation complex subunit pan3 (par-2) from Neurospora crassa (strain ATCC 24698 / 74-OR23-1A / CBS 708.71 / DSM 1257 / FGSC 987).